The primary structure comprises 4981 residues: Protocadherin Fat 4 (4981 aa).

An N-terminal signal peptide occupies residues 1 to 38 (MDLAPDRATGRPWLPLHTLSVSQLLRVFWLLSLLPGQA). The Extracellular portion of the chain corresponds to 39–4504 (WVHGAEPRQV…PEEISLPLWA (4466 aa)). Cadherin domains are found at residues 43–135 (AEPR…APVF), 136–250 (PDPS…PPVF), 251–353 (GSSH…DPVV), 359–475 (PATS…PPVF), 476–582 (SQQV…KPVF), 584–689 (QPEG…SPVF), 690–793 (YPVQ…PPVF), 794–893 (SQVA…SPHF), 894–996 (LQAI…SPVF), 997–1100 (DQLS…RPLF), 1101–1210 (NSTN…APKF), 1211–1315 (LKDF…TPSF), 1316–1420 (PKST…PPSF), 1421–1529 (PPGD…VPMF), 1529–1629 (FISQ…GPVF), 1630–1740 (TQPK…PPVF), 1741–1841 (PTDM…TPKF), 1842–1944 (SRPV…PPIF), 1945–2051 (SLNS…PPTF), 2051–2154 (FLSP…NPIF), 2155–2259 (AQAL…VPVF), 2260–2364 (ELSP…VPTF), 2365–2466 (ASKA…PPRF), 2467–2567 (QHHP…FPKV), 2568–2669 (RAKE…APIF), 2670–2773 (KEDP…APRF), 2773–2872 (FSQI…APRF), 2873–2983 (SRTS…APQF), 2984–3089 (LKSK…TPEF), 3090–3194 (SQSH…SPVF), 3195–3298 (LSDD…VPRF), 3299–3404 (VSKL…PPIF), 3405–3510 (TLNI…GPML), and 3509–3620 (MLTV…VEIF). 2 N-linked (GlcNAc...) asparagine glycosylation sites follow: N84 and N237. N-linked (GlcNAc...) asparagine glycans are attached at residues N393, N416, N435, N483, N551, N615, N676, N721, N825, N880, N946, N1085, N1101, N1104, N1225, N1296, N1389, and N1514. N-linked (GlcNAc...) asparagine glycosylation is found at N1828, N1899, N1967, and N2119. N-linked (GlcNAc...) asparagine glycosylation is found at N2387 and N2430. Residues N2921, N2937, N3036, N3140, N3217, N3392, and N3477 are each glycosylated (N-linked (GlcNAc...) asparagine). N-linked (GlcNAc...) asparagine glycosylation is found at N3706 and N3758. An EGF-like 1 domain is found at 3802–3860 (DHDSCVHGPCQNGGSCLRRLAVSSVLKSRESLPVIIVANEPLQPFLCKCLPGYAGSWCE). 12 disulfide bridges follow: C3806–C3817, C3811–C3848, C3850–C3859, C3866–C3877, C3871–C3886, C3888–C3897, C3904–C3915, C3909–C3924, C3926–C3935, C3942–C3953, C3947–C3962, and C3964–C3973. Residues 3862-3898 (DIDECLPSPCHSGGTCHNLVGGFSCSCPDGFTGRACE) form the EGF-like 2; calcium-binding domain. The EGF-like 3; calcium-binding domain maps to 3900-3936 (DINECLQSPCKNGAICQNFPGSFNCVCKTGYTGKMCE). Residues 3938–3974 (SVNYCECNPCFNGGSCQSGVDSYYCHCPFGVFGKHCE) enclose the EGF-like 4 domain. Residues 3975-4159 (LNSYGFEELS…LAAQGILDQC (185 aa)) enclose the Laminin G-like 1 domain. N4017 carries an N-linked (GlcNAc...) asparagine glycan. 4 cysteine pairs are disulfide-bonded: C4133-C4159, C4166-C4177, C4171-C4186, and C4188-C4197. In terms of domain architecture, EGF-like 5 spans 4162–4198 (LEGACTRSPCQHGGTCMDYWSWQQCHCKEGLTGKYCE). The region spanning 4217–4398 (YHMSQNEKRE…KTDPSVKIGC (182 aa)) is the Laminin G-like 2 domain. Residues N4267 and N4312 are each glycosylated (N-linked (GlcNAc...) asparagine). Intrachain disulfides connect C4365–C4398, C4430–C4441, C4435–C4451, and C4453–C4462. An EGF-like 6 domain is found at 4426–4463 (PPGDCASHPCQNGGSCEPGLHSGFTCSCPDSHTGRTCE). A helical membrane pass occupies residues 4505 to 4525 (VPAIVGSCATVLALLVLSLIL). Over 4526–4981 (CNQCRGKKAK…PKDGEAEQYV (456 aa)) the chain is Cytoplasmic. Disordered stretches follow at residues 4534–4584 (AKNP…PDII), 4680–4713 (QGLR…STFY), 4752–4856 (RSKS…MEYD), 4869–4911 (KLSQ…AAPG), and 4957–4981 (AAAN…EQYV). Residues 4680 to 4699 (QGLRTSSLSHSACPTPNPLS) are compositionally biased toward polar residues. Residues 4706–4795 (FSKSSTFYRN…GLSIEEVERL (90 aa)) form a necessary and sufficient for interaction with MPDZ region. The segment covering 4809 to 4821 (DHGRSSSEEDCRR) has biased composition (basic and acidic residues). Phosphoserine is present on S4876. Basic and acidic residues predominate over residues 4971 to 4981 (VPKDGEAEQYV).

Heterophilic interaction with DCHS1; this interaction affects their respective protein levels. Interacts (via cytoplasmic domain) with MPDZ. Forms a complex with PALS1 and MPDZ. In terms of tissue distribution, widely expressed. Expressed in fetal brain, infant brain, brain tumor and colorectal cancer.

Its subcellular location is the membrane. Its function is as follows. Cadherins are calcium-dependent cell adhesion proteins. FAT4 plays a role in the maintenance of planar cell polarity as well as in inhibition of YAP1-mediated neuroprogenitor cell proliferation and differentiation. The protein is Protocadherin Fat 4 (FAT4) of Homo sapiens (Human).